The sequence spans 503 residues: Probable cytochrome P450 6a19 (503 aa).

Cys-445 provides a ligand contact to heme.

The protein belongs to the cytochrome P450 family. It depends on heme as a cofactor.

It localises to the endoplasmic reticulum membrane. The protein localises to the microsome membrane. In terms of biological role, may be involved in the metabolism of insect hormones and in the breakdown of synthetic insecticides. The protein is Probable cytochrome P450 6a19 (Cyp6a19) of Drosophila melanogaster (Fruit fly).